We begin with the raw amino-acid sequence, 282 residues long: Deoxyribonuclease-1 (282 aa).

The signal sequence occupies residues 1 to 22; it reads MRGTRLMGLLLALAGLLQLGLS. Asparagine 40 carries N-linked (GlcNAc...) asparagine glycosylation. The active site involves glutamate 100. A disulfide bridge connects residues cysteine 123 and cysteine 126. Histidine 156 is an active-site residue. A disulfide bond links cysteine 195 and cysteine 231.

This sequence belongs to the DNase I family. It depends on Ca(2+) as a cofactor. Mg(2+) is required as a cofactor. In terms of processing, the only differences between the A and B forms and the C and D forms are in the compositions of the carbohydrate bound to Asn-40.

It localises to the secreted. It is found in the zymogen granule. The protein resides in the nucleus envelope. The enzyme catalyses Endonucleolytic cleavage to 5'-phosphodinucleotide and 5'-phosphooligonucleotide end-products.. In terms of biological role, serum endocuclease secreted into body fluids by a wide variety of exocrine and endocrine organs. Expressed by non-hematopoietic tissues and preferentially cleaves protein-free DNA. Among other functions, seems to be involved in cell death by apoptosis. Binds specifically to G-actin and blocks actin polymerization. Together with DNASE1L3, plays a key role in degrading neutrophil extracellular traps (NETs). NETs are mainly composed of DNA fibers and are released by neutrophils to bind pathogens during inflammation. Degradation of intravascular NETs by DNASE1 and DNASE1L3 is required to prevent formation of clots that obstruct blood vessels and cause organ damage following inflammation. This chain is Deoxyribonuclease-1 (DNASE1), found in Bos taurus (Bovine).